The following is a 36-amino-acid chain: Photosystem I reaction center subunit VIII (36 aa).

A helical membrane pass occupies residues 5–27 (FLPSILVPLVGLVFPAIAIASLF).

This sequence belongs to the PsaI family.

Its subcellular location is the plastid. It localises to the chloroplast thylakoid membrane. In terms of biological role, may help in the organization of the PsaL subunit. The sequence is that of Photosystem I reaction center subunit VIII from Chaetosphaeridium globosum (Charophycean green alga).